Reading from the N-terminus, the 419-residue chain is Tyrosine--tRNA ligase 2 (419 aa).

Tyrosine 34 provides a ligand contact to L-tyrosine. The 'HIGH' region motif lies at 39 to 48; the sequence is PTGDSMHIGH. 2 residues coordinate L-tyrosine: tyrosine 168 and glutamine 172. Positions 230 to 234 match the 'KMSKS' region motif; sequence KFGKS. Lysine 233 is an ATP binding site. Residues 352 to 418 enclose the S4 RNA-binding domain; it reads KNIVEWLVDL…GKKNYSLVKL (67 aa).

The protein belongs to the class-I aminoacyl-tRNA synthetase family. TyrS type 1 subfamily. In terms of assembly, homodimer.

The protein resides in the cytoplasm. It catalyses the reaction tRNA(Tyr) + L-tyrosine + ATP = L-tyrosyl-tRNA(Tyr) + AMP + diphosphate + H(+). Functionally, catalyzes the attachment of tyrosine to tRNA(Tyr) in a two-step reaction: tyrosine is first activated by ATP to form Tyr-AMP and then transferred to the acceptor end of tRNA(Tyr). The chain is Tyrosine--tRNA ligase 2 from Bacillus cereus (strain ZK / E33L).